A 640-amino-acid polypeptide reads, in one-letter code: UvrABC system protein C (640 aa).

The 80-residue stretch at 22 to 101 folds into the GIY-YIG domain; that stretch reads NDPGCYLMKD…IKSHQPYFNV (80 aa). Positions 211-246 constitute a UVR domain; it reads DELRILLEKQMISFSESLKFEEAGSVRDQLKGIDRL.

It belongs to the UvrC family. In terms of assembly, interacts with UvrB in an incision complex.

It is found in the cytoplasm. Its function is as follows. The UvrABC repair system catalyzes the recognition and processing of DNA lesions. UvrC both incises the 5' and 3' sides of the lesion. The N-terminal half is responsible for the 3' incision and the C-terminal half is responsible for the 5' incision. This chain is UvrABC system protein C, found in Prochlorococcus marinus (strain NATL2A).